The primary structure comprises 197 residues: Nucleoside triphosphate pyrophosphatase (197 aa).

Asp72 (proton acceptor) is an active-site residue.

The protein belongs to the Maf family. It depends on a divalent metal cation as a cofactor.

The protein localises to the cytoplasm. The enzyme catalyses a ribonucleoside 5'-triphosphate + H2O = a ribonucleoside 5'-phosphate + diphosphate + H(+). It catalyses the reaction a 2'-deoxyribonucleoside 5'-triphosphate + H2O = a 2'-deoxyribonucleoside 5'-phosphate + diphosphate + H(+). Functionally, nucleoside triphosphate pyrophosphatase. May have a dual role in cell division arrest and in preventing the incorporation of modified nucleotides into cellular nucleic acids. The protein is Nucleoside triphosphate pyrophosphatase of Corynebacterium glutamicum (strain ATCC 13032 / DSM 20300 / JCM 1318 / BCRC 11384 / CCUG 27702 / LMG 3730 / NBRC 12168 / NCIMB 10025 / NRRL B-2784 / 534).